The chain runs to 442 residues: Exodeoxyribonuclease 7 large subunit (442 aa).

It belongs to the XseA family. Heterooligomer composed of large and small subunits.

It localises to the cytoplasm. It carries out the reaction Exonucleolytic cleavage in either 5'- to 3'- or 3'- to 5'-direction to yield nucleoside 5'-phosphates.. Its function is as follows. Bidirectionally degrades single-stranded DNA into large acid-insoluble oligonucleotides, which are then degraded further into small acid-soluble oligonucleotides. This is Exodeoxyribonuclease 7 large subunit from Rickettsia bellii (strain OSU 85-389).